A 257-amino-acid chain; its full sequence is Snake venom serine protease Dav-KN (257 aa).

The N-terminal stretch at methionine 1–alanine 18 is a signal peptide. Positions glutamine 19–leucine 24 are excised as a propeptide. The Peptidase S1 domain maps to valine 25–alanine 248. Cystine bridges form between cysteine 31–cysteine 162, cysteine 49–cysteine 65, cysteine 97–cysteine 255, cysteine 173–cysteine 188, and cysteine 199–cysteine 224. Residues histidine 64 and aspartate 109 each act as charge relay system in the active site. Serine 203 acts as the Charge relay system in catalysis.

The protein belongs to the peptidase S1 family. Snake venom subfamily. As to quaternary structure, monomer. In terms of tissue distribution, expressed by the venom gland.

It is found in the secreted. In terms of biological role, snake venom serine protease that may act in the hemostasis system of the prey. This chain is Snake venom serine protease Dav-KN, found in Deinagkistrodon acutus (Hundred-pace snake).